A 509-amino-acid polypeptide reads, in one-letter code: MEQKYLLQPGKLTIETMRQVHRRHVPITLAPDSFERIHSAEQTVRDVITQGRTVYGINTGFGLLANTKIEVDELELLQRSIVLSHAAGIGTLMSASTVRLLMLLKINSLARGYSGIRLIVIEALIALYNHQVYPAIPEKGSVGASGDLAPLAHMSAVLLGEGEVIYQGNQISAEKGLMIAGLQPISLAPKEGLALLNGTQASTAFALQGLFYAENALTSSIAIGALSVDAALGSRVPFNERIHIVRGHQAQIDVATGFRTLLQESEIGKSHGGCEKVQDPYSLRCQPQVMGACLQQMRFAKQILVTEANGVSDNPIVFSESDDVLSGGNFHAETVAMAADMLAIALAEIGALSERRMALLIDSSLSGLPPFLVDNGGVNSGFMIAQVTSAALASENKSYAHPASIDSLPTSANQEDHVSMATFAGRRLRDIFDNVAGILAIEWLAASQGIDFRFPLKTSTQLQSVHALMRSKVTFYDKDRYFSPDIEQAKLLITRHSLSDLVQQDIQLL.

The segment at residues 144–146 (ASG) is a cross-link (5-imidazolinone (Ala-Gly)). Ser145 carries the post-translational modification 2,3-didehydroalanine (Ser).

The protein belongs to the PAL/histidase family. Contains an active site 4-methylidene-imidazol-5-one (MIO), which is formed autocatalytically by cyclization and dehydration of residues Ala-Ser-Gly.

It localises to the cytoplasm. The catalysed reaction is L-histidine = trans-urocanate + NH4(+). It participates in amino-acid degradation; L-histidine degradation into L-glutamate; N-formimidoyl-L-glutamate from L-histidine: step 1/3. This Pseudoalteromonas atlantica (strain T6c / ATCC BAA-1087) protein is Histidine ammonia-lyase.